Reading from the N-terminus, the 639-residue chain is MSSFAGRMKEYPSISLDRFDRENLHARAYFLSHCHKDHMKGLKGPLLKRKLKFSLTVKLYCSYVTKELLLSNPRYAFWEDHIVPLELDSPTSISLIDESTGETEDVVVTLLSAGHCPGSVMFLFEGAKGTVLYTGDFRLAVGDAARMEYLHSGDRVKDIQSVYIDTTFFDPKYYQIPSREACLAGIQQLVQDWICQSPYHVVWLNCKAAYGYEYLFTNLGQEFNSQIHVNSLDMFKKMPEILCHVTTNRATQIHACRHPKDEEFFRANRLPCGSTAPDGIPLNIISIKPSTIWFGERTRKTSVVVKMGSSSYRACFSFHSSYLEVKDFLSYICPVNIYPNVIPLGKTVEDLTELLKPLCRKHCGREEIVYKPLGALKRTRKRSTSEGSDSDGDLFEEVSTAPRRRKITVSDLTTVAIRVRPHSANADSHDNDQTYSLIKLCPSAHTSNYMDCTESNDDDDDEDDAAEQTPAAAPPPSSTEKPCSKHTHSDSSLTSSTQPCWEKFFKAEVVLTDESELENSQNTQTLSTENTASQSPELFQDEDEDSSVHMSSSQSTHISDAGTESLSQVDTIMVQEDHSKACNLQHKTEEAAELKSDSQVSSDFELPPTPGSKVPQPEDLKELYRKLAAGEDVVARQIF.

3 disordered regions span residues 450-496 (MDCT…LTSS), 515-570 (SELE…SQVD), and 590-617 (EAAE…VPQP). Acidic residues predominate over residues 454–466 (ESNDDDDDEDDAA). Polar residues predominate over residues 518–537 (ENSQNTQTLSTENTASQSPE). Residues 548-560 (VHMSSSQSTHISD) are compositionally biased toward low complexity.

The protein belongs to the DNA repair metallo-beta-lactamase (DRMBL) family.

It is found in the nucleus. In terms of biological role, may have a role in the processing of DNA double strand breaks (DSBs) prior to their repair by the non homologous end joining (NHEJ) pathway. Probably exhibits both exonuclease and endonuclease activity. The protein is Protein artemis (dclre1c) of Danio rerio (Zebrafish).